A 229-amino-acid polypeptide reads, in one-letter code: Ribonuclease 3 (229 aa).

The RNase III domain maps to 4–133 (WEELQESVGF…FIGALYLDNG (130 aa)). Residue E46 coordinates Mg(2+). The active site involves D50. Mg(2+) contacts are provided by D119 and E122. Residue E122 is part of the active site. One can recognise a DRBM domain in the interval 159–228 (DYKTQLQEIV…AQFAINQLTH (70 aa)).

Belongs to the ribonuclease III family. Homodimer. It depends on Mg(2+) as a cofactor.

The protein resides in the cytoplasm. The catalysed reaction is Endonucleolytic cleavage to 5'-phosphomonoester.. Functionally, digests double-stranded RNA. Involved in the processing of primary rRNA transcript to yield the immediate precursors to the large and small rRNAs (23S and 16S). Processes some mRNAs, and tRNAs when they are encoded in the rRNA operon. Processes pre-crRNA and tracrRNA of type II CRISPR loci if present in the organism. The protein is Ribonuclease 3 of Listeria welshimeri serovar 6b (strain ATCC 35897 / DSM 20650 / CCUG 15529 / CIP 8149 / NCTC 11857 / SLCC 5334 / V8).